Reading from the N-terminus, the 235-residue chain is Putative N-acetylmannosamine-6-phosphate 2-epimerase (235 aa).

The protein belongs to the NanE family.

It catalyses the reaction an N-acyl-D-glucosamine 6-phosphate = an N-acyl-D-mannosamine 6-phosphate. The protein operates within amino-sugar metabolism; N-acetylneuraminate degradation; D-fructose 6-phosphate from N-acetylneuraminate: step 3/5. Converts N-acetylmannosamine-6-phosphate (ManNAc-6-P) to N-acetylglucosamine-6-phosphate (GlcNAc-6-P). The chain is Putative N-acetylmannosamine-6-phosphate 2-epimerase from Enterobacter sp. (strain 638).